We begin with the raw amino-acid sequence, 144 residues long: Neuritin-B (144 aa).

Residues 1–27 (MGLKLSGRYIFLVLAVHLAYLLQAVKA) form the signal peptide. Residue serine 114 is the site of GPI-anchor amidated serine attachment. The propeptide at 115–144 (TGAPGPRLLFPAFLPLLIVFLSALLNWVLQ) is removed in mature form.

The protein belongs to the neuritin family.

The protein localises to the cell membrane. Functionally, modulates postsynaptic dendritic arbor elaboration and synaptic maturation. This chain is Neuritin-B (nrn1-b), found in Xenopus laevis (African clawed frog).